A 1394-amino-acid polypeptide reads, in one-letter code: Kinesin-like protein KIF27 (1394 aa).

The Kinesin motor domain occupies 5–341 (PIKVAVRIRP…LKYANRARNI (337 aa)). Residue 84-91 (GQTGSGKT) coordinates ATP. Coiled-coil stretches lie at residues 352 to 418 (QADR…IEQA) and 493 to 554 (QVVF…ELAK). Disordered regions lie at residues 551–583 (ELAK…PHTA) and 642–664 (FSDN…SRSH). Polar residues predominate over residues 555-565 (RSSSMPTSTKE). Positions 571–580 (PDARAPEKRP) are enriched in basic and acidic residues. Phosphoserine is present on residues Ser643, Ser646, Ser672, Ser675, and Ser704. Positions 709–980 (LQKLRTSELI…NKKLRSSQAL (272 aa)) form a coiled coil. Ser999 carries the phosphoserine modification. Coiled-coil stretches lie at residues 1010 to 1078 (TEEK…SIQN), 1118 to 1152 (NKVI…HELE), and 1187 to 1226 (QDGE…RLKD). Positions 1267-1280 (TENTKLNGREKEVD) are enriched in basic and acidic residues. Residues 1267 to 1340 (TENTKLNGRE…SQSPPPPQLQ (74 aa)) form a disordered region. Polar residues-rich tracts occupy residues 1281–1295 (NSSS…TQQI) and 1310–1320 (APSSGQLQSSA). 2 positions are modified to phosphoserine: Ser1365 and Ser1387. Residues 1375–1394 (SLGAGVRSVTADSLEEPEES) form a disordered region.

Belongs to the TRAFAC class myosin-kinesin ATPase superfamily. Kinesin family. KIF27 subfamily. In terms of assembly, interacts with STK36.

The protein localises to the cytoplasm. It is found in the cytoskeleton. The protein resides in the cell projection. Its subcellular location is the cilium. Functionally, plays an essential role in motile ciliogenesis. The sequence is that of Kinesin-like protein KIF27 (Kif27) from Rattus norvegicus (Rat).